The primary structure comprises 229 residues: NAD(P)H-quinone oxidoreductase subunit K, chloroplastic (229 aa).

[4Fe-4S] cluster contacts are provided by C43, C44, C108, and C139.

It belongs to the complex I 20 kDa subunit family. As to quaternary structure, NDH is composed of at least 16 different subunits, 5 of which are encoded in the nucleus. The cofactor is [4Fe-4S] cluster.

Its subcellular location is the plastid. The protein localises to the chloroplast thylakoid membrane. It carries out the reaction a plastoquinone + NADH + (n+1) H(+)(in) = a plastoquinol + NAD(+) + n H(+)(out). It catalyses the reaction a plastoquinone + NADPH + (n+1) H(+)(in) = a plastoquinol + NADP(+) + n H(+)(out). NDH shuttles electrons from NAD(P)H:plastoquinone, via FMN and iron-sulfur (Fe-S) centers, to quinones in the photosynthetic chain and possibly in a chloroplast respiratory chain. The immediate electron acceptor for the enzyme in this species is believed to be plastoquinone. Couples the redox reaction to proton translocation, and thus conserves the redox energy in a proton gradient. The polypeptide is NAD(P)H-quinone oxidoreductase subunit K, chloroplastic (Piper cenocladum (Ant piper)).